Here is a 362-residue protein sequence, read N- to C-terminus: HMG box-containing protein C19G7.04 (362 aa).

A SprT-like domain is found at 135-299 (KCFLARLEDE…RLCKSQIKQI (165 aa)). The segment at residues 306 to 348 (PNAFQIFLKENSKRLRKLHPHITHKELMKKLSDEYHRTKDAKQ) is a DNA-binding region (HMG box).

The protein localises to the nucleus. It is found in the cytoplasm. It localises to the cytoskeleton. The protein resides in the spindle. In Schizosaccharomyces pombe (strain 972 / ATCC 24843) (Fission yeast), this protein is HMG box-containing protein C19G7.04.